The following is a 273-amino-acid chain: DNA replication complex GINS protein psf2 (273 aa).

2 disordered regions span residues 88 to 110 (KEDP…SQPG) and 240 to 273 (ASAE…DMGL). The segment covering 244–257 (ATRREEEEEARRGG) has biased composition (basic and acidic residues). Acidic residues predominate over residues 261–273 (GDGDEDSDEDMGL).

It belongs to the GINS2/PSF2 family. Component of the GINS complex which is a heterotetramer of div-26/sld5, drc-1/psf1, drc-2/psf2 and drc-3/psf3.

It is found in the nucleus. The GINS complex plays an essential role in the initiation of DNA replication. Has a role in chromosome segregation. In Neurospora crassa (strain ATCC 24698 / 74-OR23-1A / CBS 708.71 / DSM 1257 / FGSC 987), this protein is DNA replication complex GINS protein psf2 (drc-2).